The sequence spans 492 residues: Glutamyl-tRNA(Gln) amidotransferase subunit A (492 aa).

Residues K78 and S158 each act as charge relay system in the active site. Catalysis depends on S182, which acts as the Acyl-ester intermediate.

The protein belongs to the amidase family. GatA subfamily. As to quaternary structure, heterotrimer of A, B and C subunits.

The catalysed reaction is L-glutamyl-tRNA(Gln) + L-glutamine + ATP + H2O = L-glutaminyl-tRNA(Gln) + L-glutamate + ADP + phosphate + H(+). Its function is as follows. Allows the formation of correctly charged Gln-tRNA(Gln) through the transamidation of misacylated Glu-tRNA(Gln) in organisms which lack glutaminyl-tRNA synthetase. The reaction takes place in the presence of glutamine and ATP through an activated gamma-phospho-Glu-tRNA(Gln). This is Glutamyl-tRNA(Gln) amidotransferase subunit A from Rhodopseudomonas palustris (strain BisB5).